The chain runs to 547 residues: Probable FMN/FAD exporter YeeO (547 aa).

11 helical membrane passes run 94-114 (ITPL…MGVL), 139-159 (VIMA…AFSL), 174-194 (SLVI…HFGE), 211-231 (LALT…ITLI), 246-268 (LLIN…YGLF), 281-301 (GLTI…AIGF), 318-338 (FSII…SVLF), 350-370 (AGMG…AALI), 404-424 (VFWL…PFAG), 439-459 (VVVI…ASWV), and 486-506 (VVVG…VWMG).

This sequence belongs to the multi antimicrobial extrusion (MATE) (TC 2.A.66.1) family.

It localises to the cell inner membrane. Functionally, a transporter able to export peptides and flavins. When overexpressed allows cells deleted for multiple peptidases (pepA, pepB, pepD and pepN) to grow in the presence of dipeptides Ala-Gln or Gly-Tyr which otherwise inhibit growth. Cells overexpressing this protein have decreased intracellular levels of Ala-Gln dipeptide, and in a system that produces the Ala-Gln dipeptide, overproduction of this protein increases its export. When overexpressed increases secretion of FMN and FAD but not riboflavin; intracellular concentrations of FMN and riboflavin rise, possibly to compensate for increased secretion. Increased overexpression causes slight cell elongation. The protein is Probable FMN/FAD exporter YeeO (yeeO) of Escherichia coli (strain K12).